We begin with the raw amino-acid sequence, 245 residues long: MADKKPAADNWPVVSGDYIVGDPESPVAVTTLASHNEDIPAAAGAAIAGPCKTENLGIEKVVANIISNPNIRFLILCGAEVQGHITGQSIQALHENGCDPEKKKITGATGAIPFVENIPMEGVERFQQQVELVDLIDNEDGGAITAKVKECIEKDPGAFEEDAMVIEVKEGDDDEDEGEEIRPISAETALLEARIRNIDTQVKLVGAVQRNMAGNYSGKVQGIMIGLIFTLVIGFLLLMAPLLGA.

The Cytoplasmic segment spans residues 1 to 222 (MADKKPAADN…AGNYSGKVQG (222 aa)). His84 is a 5-hydroxybenzimidazolylcob(I)amide binding site. Residues 223–243 (IMIGLIFTLVIGFLLLMAPLL) form a helical membrane-spanning segment. The Extracellular segment spans residues 244-245 (GA).

The protein belongs to the MtrA family. As to quaternary structure, the complex is composed of 8 subunits; MtrA, MtrB, MtrC, MtrD, MtrE, MtrF, MtrG and MtrH. 5-hydroxybenzimidazolylcob(I)amide serves as cofactor.

Its subcellular location is the cell membrane. The enzyme catalyses 5-methyl-5,6,7,8-tetrahydromethanopterin + coenzyme M + 2 Na(+)(in) = 5,6,7,8-tetrahydromethanopterin + methyl-coenzyme M + 2 Na(+)(out). It participates in one-carbon metabolism; methanogenesis from CO(2); methyl-coenzyme M from 5,10-methylene-5,6,7,8-tetrahydromethanopterin: step 2/2. Part of a complex that catalyzes the formation of methyl-coenzyme M and tetrahydromethanopterin from coenzyme M and methyl-tetrahydromethanopterin. This is an energy-conserving, sodium-ion translocating step. The chain is Tetrahydromethanopterin S-methyltransferase subunit A 1 from Methanobrevibacter ruminantium (strain ATCC 35063 / DSM 1093 / JCM 13430 / OCM 146 / M1) (Methanobacterium ruminantium).